The chain runs to 1088 residues: Methionine S-methyltransferase (1088 aa).

It belongs to the class I-like SAM-binding methyltransferase superfamily. As to quaternary structure, homotetramer.

The protein resides in the cytoplasm. The enzyme catalyses L-methionine + S-adenosyl-L-methionine = S-methyl-L-methionine + S-adenosyl-L-homocysteine. Its function is as follows. Catalyzes the S-methylmethionine (SMM) biosynthesis from adenosyl-L-homocysteine (AdoMet) and methionine. SMM biosynthesis (by MMT1) and degradation (by HMT-1, HMT-2 and HMT-3) constitute the SMM cycle in plants, which is probably required to achieve short term control of AdoMet level. Also able to catalyze the selenium-methylmethionine (SeMM) from AdoMet and selenium-methionine (SeMet). May play a role in phoem sulfur transport; such function is however not essential. The sequence is that of Methionine S-methyltransferase (MMT1) from Wollastonia biflora (Beach sunflower).